A 165-amino-acid chain; its full sequence is Transmembrane protein 253 (165 aa).

Transmembrane regions (helical) follow at residues 31 to 51 (LVLA…AVSV), 60 to 80 (MTTA…IVTL), and 91 to 111 (LAGL…GVLV). The disordered stretch occupies residues 145 to 165 (EEVPELETGPTVASTAKRTNQ). The segment covering 155-165 (TVASTAKRTNQ) has biased composition (polar residues).

Its subcellular location is the membrane. This is Transmembrane protein 253 (TMEM253) from Bos taurus (Bovine).